The sequence spans 190 residues: Translation initiation factor IF-3 (190 aa).

Belongs to the IF-3 family. As to quaternary structure, monomer.

It is found in the cytoplasm. In terms of biological role, IF-3 binds to the 30S ribosomal subunit and shifts the equilibrium between 70S ribosomes and their 50S and 30S subunits in favor of the free subunits, thus enhancing the availability of 30S subunits on which protein synthesis initiation begins. In Prochlorococcus marinus subsp. pastoris (strain CCMP1986 / NIES-2087 / MED4), this protein is Translation initiation factor IF-3.